Here is a 578-residue protein sequence, read N- to C-terminus: Sulfite reductase [NADPH] hemoprotein beta-component (578 aa).

The segment at 1–21 (MTNTLAGPDRSRDISQPLEKL) is disordered. C443, C449, C488, and C492 together coordinate [4Fe-4S] cluster. C492 contributes to the siroheme binding site.

The protein belongs to the nitrite and sulfite reductase 4Fe-4S domain family. Alpha(8)-beta(8). The alpha component is a flavoprotein, the beta component is a hemoprotein. Siroheme serves as cofactor. The cofactor is [4Fe-4S] cluster.

It carries out the reaction hydrogen sulfide + 3 NADP(+) + 3 H2O = sulfite + 3 NADPH + 4 H(+). It participates in sulfur metabolism; hydrogen sulfide biosynthesis; hydrogen sulfide from sulfite (NADPH route): step 1/1. Its function is as follows. Component of the sulfite reductase complex that catalyzes the 6-electron reduction of sulfite to sulfide. This is one of several activities required for the biosynthesis of L-cysteine from sulfate. In Methylocella silvestris (strain DSM 15510 / CIP 108128 / LMG 27833 / NCIMB 13906 / BL2), this protein is Sulfite reductase [NADPH] hemoprotein beta-component.